The sequence spans 489 residues: 3-octaprenyl-4-hydroxybenzoate carboxy-lyase (489 aa).

Asn172 is a binding site for Mn(2+). Prenylated FMN contacts are provided by residues 175-177, 189-191, and 194-195; these read IYR, RWL, and RG. Residue Glu238 participates in Mn(2+) binding. Asp287 acts as the Proton donor in catalysis.

This sequence belongs to the UbiD family. Homohexamer. Prenylated FMN is required as a cofactor. Mn(2+) serves as cofactor.

It localises to the cell membrane. The enzyme catalyses a 4-hydroxy-3-(all-trans-polyprenyl)benzoate + H(+) = a 2-(all-trans-polyprenyl)phenol + CO2. It participates in cofactor biosynthesis; ubiquinone biosynthesis. Its function is as follows. Catalyzes the decarboxylation of 3-octaprenyl-4-hydroxy benzoate to 2-octaprenylphenol, an intermediate step in ubiquinone biosynthesis. This Aeromonas hydrophila subsp. hydrophila (strain ATCC 7966 / DSM 30187 / BCRC 13018 / CCUG 14551 / JCM 1027 / KCTC 2358 / NCIMB 9240 / NCTC 8049) protein is 3-octaprenyl-4-hydroxybenzoate carboxy-lyase.